Here is a 273-residue protein sequence, read N- to C-terminus: Dermonecrotic toxin LspaSicTox-alphaIA1ii (273 aa).

His-5 is a catalytic residue. Positions 25 and 27 each coordinate Mg(2+). His-41 (nucleophile) is an active-site residue. Cystine bridges form between Cys-45/Cys-51 and Cys-47/Cys-190. Asp-85 contacts Mg(2+).

This sequence belongs to the arthropod phospholipase D family. Class II subfamily. Requires Mg(2+) as cofactor. In terms of tissue distribution, expressed by the venom gland.

The protein localises to the secreted. The catalysed reaction is an N-(acyl)-sphingosylphosphocholine = an N-(acyl)-sphingosyl-1,3-cyclic phosphate + choline. It carries out the reaction an N-(acyl)-sphingosylphosphoethanolamine = an N-(acyl)-sphingosyl-1,3-cyclic phosphate + ethanolamine. The enzyme catalyses a 1-acyl-sn-glycero-3-phosphocholine = a 1-acyl-sn-glycero-2,3-cyclic phosphate + choline. It catalyses the reaction a 1-acyl-sn-glycero-3-phosphoethanolamine = a 1-acyl-sn-glycero-2,3-cyclic phosphate + ethanolamine. In terms of biological role, dermonecrotic toxins cleave the phosphodiester linkage between the phosphate and headgroup of certain phospholipids (sphingolipid and lysolipid substrates), forming an alcohol (often choline) and a cyclic phosphate. This toxin acts on sphingomyelin (SM). It may also act on ceramide phosphoethanolamine (CPE), lysophosphatidylcholine (LPC) and lysophosphatidylethanolamine (LPE), but not on lysophosphatidylserine (LPS), and lysophosphatidylglycerol (LPG). It acts by transphosphatidylation, releasing exclusively cyclic phosphate products as second products. Induces dermonecrosis, hemolysis, increased vascular permeability, edema, inflammatory response, and platelet aggregation. The chain is Dermonecrotic toxin LspaSicTox-alphaIA1ii from Loxosceles spadicea (Recluse spider).